Here is a 375-residue protein sequence, read N- to C-terminus: Growth/differentiation factor 8 (375 aa).

Residues 1–18 (MQKLQISVYIYLFMLIVA) form the signal peptide. A propeptide spanning residues 19–266 (GPVDLNEKSE…VTDTPKRSRR (248 aa)) is cleaved from the precursor. Residues Asn-47 and Asn-71 are each glycosylated (N-linked (GlcNAc...) asparagine). 4 cysteine pairs are disulfide-bonded: Cys-272/Cys-282, Cys-281/Cys-340, Cys-309/Cys-372, and Cys-313/Cys-374.

The protein belongs to the TGF-beta family. Homodimer; disulfide-linked. Interacts with WFIKKN2, leading to inhibit its activity. Interacts with FSTL3. In terms of processing, synthesized as large precursor molecule that undergoes proteolytic cleavage to generate an N-terminal propeptide and a disulfide linked C-terminal dimer, which is the biologically active molecule. The circulating form consists of a latent complex of the C-terminal dimer and other proteins, including its propeptide, which maintain the C-terminal dimer in a latent, inactive state. Ligand activation requires additional cleavage of the prodomain by a tolloid-like metalloproteinase.

The protein resides in the secreted. Its function is as follows. Acts specifically as a negative regulator of skeletal muscle growth. In Taurotragus derbianus (Giant eland), this protein is Growth/differentiation factor 8 (MSTN).